Consider the following 144-residue polypeptide: Putative HTH-type transcriptional regulator aq_268 (144 aa).

In terms of domain architecture, HTH rrf2-type spans 2–133 (IFSDTVRYAL…KGTTIKDLIN (132 aa)).

This is Putative HTH-type transcriptional regulator aq_268 from Aquifex aeolicus (strain VF5).